The chain runs to 524 residues: Cytochrome P450 1A1 (524 aa).

The mitochondrial targeting signal stretch occupies residues 33 to 44 (WQPRLPKGLKSP). A glycan (O-linked (GlcNAc) serine) is linked at serine 71. Phenylalanine 228 serves as a coordination point for substrate. Cysteine 461 contributes to the heme binding site.

The protein belongs to the cytochrome P450 family. In terms of assembly, interacts with cytosolic chaperones HSP70 and HSP90; this interaction is required for initial targeting to mitochondria. Interacts (via mitochondrial targeting signal) with TOMM40 (via N-terminus); this interaction is required for translocation across the mitochondrial outer membrane. The cofactor is heme.

The protein localises to the endoplasmic reticulum membrane. The protein resides in the mitochondrion inner membrane. Its subcellular location is the microsome membrane. It localises to the cytoplasm. It catalyses the reaction an organic molecule + reduced [NADPH--hemoprotein reductase] + O2 = an alcohol + oxidized [NADPH--hemoprotein reductase] + H2O + H(+). The catalysed reaction is estrone + reduced [NADPH--hemoprotein reductase] + O2 = 2-hydroxyestrone + oxidized [NADPH--hemoprotein reductase] + H2O + H(+). The enzyme catalyses estrone + reduced [NADPH--hemoprotein reductase] + O2 = 4-hydroxyestrone + oxidized [NADPH--hemoprotein reductase] + H2O + H(+). It carries out the reaction estrone + reduced [NADPH--hemoprotein reductase] + O2 = 6alpha-hydroxyestrone + oxidized [NADPH--hemoprotein reductase] + H2O + H(+). It catalyses the reaction estrone + reduced [NADPH--hemoprotein reductase] + O2 = 15alpha-hydroxyestrone + oxidized [NADPH--hemoprotein reductase] + H2O + H(+). The catalysed reaction is estrone + reduced [NADPH--hemoprotein reductase] + O2 = 16alpha-hydroxyestrone + oxidized [NADPH--hemoprotein reductase] + H2O + H(+). The enzyme catalyses 17beta-estradiol + reduced [NADPH--hemoprotein reductase] + O2 = 2-hydroxy-17beta-estradiol + oxidized [NADPH--hemoprotein reductase] + H2O + H(+). It carries out the reaction 17beta-estradiol + reduced [NADPH--hemoprotein reductase] + O2 = 4-hydroxy-17beta-estradiol + oxidized [NADPH--hemoprotein reductase] + H2O + H(+). It catalyses the reaction 17beta-estradiol + reduced [NADPH--hemoprotein reductase] + O2 = 6alpha-hydroxy-17beta-estradiol + oxidized [NADPH--hemoprotein reductase] + H2O + H(+). The catalysed reaction is 17beta-estradiol + reduced [NADPH--hemoprotein reductase] + O2 = 7alpha-hydroxy-17beta-estradiol + oxidized [NADPH--hemoprotein reductase] + H2O + H(+). The enzyme catalyses 17beta-estradiol + reduced [NADPH--hemoprotein reductase] + O2 = 15alpha-hydroxy-17beta-estradiol + oxidized [NADPH--hemoprotein reductase] + H2O + H(+). It carries out the reaction (5Z,8Z,11Z)-eicosatrienoate + reduced [NADPH--hemoprotein reductase] + O2 = 19-hydroxy-(5Z,8Z,11Z)-eicosatrienoate + oxidized [NADPH--hemoprotein reductase] + H2O + H(+). It catalyses the reaction (5Z,8Z,11Z,14Z)-eicosatetraenoate + reduced [NADPH--hemoprotein reductase] + O2 = 16-hydroxy-(5Z,8Z,11Z,14Z)-eicosatetraenoate + oxidized [NADPH--hemoprotein reductase] + H2O + H(+). The catalysed reaction is (5Z,8Z,11Z,14Z)-eicosatetraenoate + reduced [NADPH--hemoprotein reductase] + O2 = 17-hydroxy-(5Z,8Z,11Z,14Z)-eicosatetraenoate + oxidized [NADPH--hemoprotein reductase] + H2O + H(+). The enzyme catalyses (5Z,8Z,11Z,14Z)-eicosatetraenoate + reduced [NADPH--hemoprotein reductase] + O2 = 18-hydroxy-(5Z,8Z,11Z,14Z)-eicosatetraenoate + oxidized [NADPH--hemoprotein reductase] + H2O + H(+). It carries out the reaction (5Z,8Z,11Z,14Z)-eicosatetraenoate + reduced [NADPH--hemoprotein reductase] + O2 = 19-hydroxy-(5Z,8Z,11Z,14Z)-eicosatetraenoate + oxidized [NADPH--hemoprotein reductase] + H2O + H(+). It catalyses the reaction (5Z,8Z,11Z,14Z,17Z)-eicosapentaenoate + reduced [NADPH--hemoprotein reductase] + O2 = 19-hydroxy-(5Z,8Z,11Z,14Z,17Z)-eicosapentaenoate + oxidized [NADPH--hemoprotein reductase] + H2O + H(+). The catalysed reaction is (5Z,8Z,11Z,14Z)-eicosatetraenoate + reduced [NADPH--hemoprotein reductase] + O2 = (8R,9S)-epoxy-(5Z,11Z,14Z)-eicosatrienoate + oxidized [NADPH--hemoprotein reductase] + H2O + H(+). The enzyme catalyses (5Z,8Z,11Z,14Z)-eicosatetraenoate + reduced [NADPH--hemoprotein reductase] + O2 = (11R,12S)-epoxy-(5Z,8Z,14Z)-eicosatrienoate + oxidized [NADPH--hemoprotein reductase] + H2O + H(+). It carries out the reaction (5Z,8Z,11Z,14Z)-eicosatetraenoate + reduced [NADPH--hemoprotein reductase] + O2 = (14S,15R)-epoxy-(5Z,8Z,11Z)-eicosatrienoate + oxidized [NADPH--hemoprotein reductase] + H2O + H(+). It catalyses the reaction (5Z,8Z,11Z,14Z)-eicosatetraenoate + reduced [NADPH--hemoprotein reductase] + O2 = (14R,15S)-epoxy-(5Z,8Z,11Z)-eicosatrienoate + oxidized [NADPH--hemoprotein reductase] + H2O + H(+). The catalysed reaction is (5Z,8Z,11Z,14Z,17Z)-eicosapentaenoate + reduced [NADPH--hemoprotein reductase] + O2 = (17R,18S)-epoxy-(5Z,8Z,11Z,14Z)-eicosatetraenoate + oxidized [NADPH--hemoprotein reductase] + H2O + H(+). The enzyme catalyses (4Z,7Z,10Z,13Z,16Z,19Z)-docosahexaenoate + reduced [NADPH--hemoprotein reductase] + O2 = (19S,20R)-epoxy-(4Z,7Z,10Z,13Z,16Z)-docosapentaenoate + oxidized [NADPH--hemoprotein reductase] + H2O + H(+). It carries out the reaction (4Z,7Z,10Z,13Z,16Z,19Z)-docosahexaenoate + reduced [NADPH--hemoprotein reductase] + O2 = (19R,20S)-epoxy-(4Z,7Z,10Z,13Z,16Z)-docosapentaenoate + oxidized [NADPH--hemoprotein reductase] + H2O + H(+). It catalyses the reaction all-trans-retinol + reduced [NADPH--hemoprotein reductase] + O2 = all-trans-retinal + oxidized [NADPH--hemoprotein reductase] + 2 H2O + H(+). The catalysed reaction is all-trans-retinal + reduced [NADPH--hemoprotein reductase] + O2 = all-trans-retinoate + oxidized [NADPH--hemoprotein reductase] + H2O + 2 H(+). The enzyme catalyses (13S)-hydroperoxy-(9Z,11E)-octadecadienoate = 13-oxo-(9Z,11E)-octadecadienoate + H2O. It carries out the reaction (12S)-hydroperoxy-(5Z,8Z,10E,14Z)-eicosatetraenoate = 12-oxo-(5Z,8Z,10E,14Z)-eicosatetraenoate + H2O. It catalyses the reaction (15S)-hydroperoxy-(5Z,8Z,11Z,13E)-eicosatetraenoate = 15-oxo-(5Z,8Z,11Z,13E)-eicosatetraenoate + H2O. The catalysed reaction is (5S)-hydroperoxy-(6E,8Z,11Z,14Z)-eicosatetraenoate = 5-oxo-(6E,8Z,11Z,14Z)-eicosatetraenoate + H2O. It participates in steroid hormone biosynthesis. The protein operates within lipid metabolism; fatty acid metabolism. Its pathway is cofactor metabolism; retinol metabolism. In terms of biological role, a cytochrome P450 monooxygenase involved in the metabolism of various endogenous substrates, including fatty acids, steroid hormones and vitamins. Mechanistically, uses molecular oxygen inserting one oxygen atom into a substrate, and reducing the second into a water molecule, with two electrons provided by NADPH via cytochrome P450 reductase (CPR; NADPH-ferrihemoprotein reductase). Catalyzes the hydroxylation of carbon-hydrogen bonds. Exhibits high catalytic activity for the formation of hydroxyestrogens from estrone (E1) and 17beta-estradiol (E2), namely 2-hydroxy E1 and E2, as well as D-ring hydroxylated E1 and E2 at the C15alpha and C16alpha positions. Displays different regioselectivities for polyunsaturated fatty acids (PUFA) hydroxylation. Catalyzes the epoxidation of double bonds of certain PUFA. Converts arachidonic acid toward epoxyeicosatrienoic acid (EET) regioisomers, 8,9-, 11,12-, and 14,15-EET, that function as lipid mediators in the vascular system. Displays an absolute stereoselectivity in the epoxidation of eicosapentaenoic acid (EPA) producing the 17(R),18(S) enantiomer. May play an important role in all-trans retinoic acid biosynthesis in extrahepatic tissues. Catalyzes two successive oxidative transformation of all-trans retinol to all-trans retinal and then to the active form all-trans retinoic acid. May also participate in eicosanoids metabolism by converting hydroperoxide species into oxo metabolites (lipoxygenase-like reaction, NADPH-independent). The sequence is that of Cytochrome P450 1A1 (CYP1A1) from Canis lupus familiaris (Dog).